A 294-amino-acid polypeptide reads, in one-letter code: 33 kDa chaperonin (294 aa).

Intrachain disulfides connect cysteine 239–cysteine 241 and cysteine 272–cysteine 275.

Belongs to the HSP33 family. Under oxidizing conditions two disulfide bonds are formed involving the reactive cysteines. Under reducing conditions zinc is bound to the reactive cysteines and the protein is inactive.

The protein resides in the cytoplasm. Its function is as follows. Redox regulated molecular chaperone. Protects both thermally unfolding and oxidatively damaged proteins from irreversible aggregation. Plays an important role in the bacterial defense system toward oxidative stress. This is 33 kDa chaperonin from Listeria innocua serovar 6a (strain ATCC BAA-680 / CLIP 11262).